Here is a 159-residue protein sequence, read N- to C-terminus: Transcription antitermination protein NusB (159 aa).

The protein belongs to the NusB family.

In terms of biological role, involved in transcription antitermination. Required for transcription of ribosomal RNA (rRNA) genes. Binds specifically to the boxA antiterminator sequence of the ribosomal RNA (rrn) operons. This chain is Transcription antitermination protein NusB, found in Xanthomonas campestris pv. campestris (strain 8004).